The chain runs to 295 residues: Methionine aminopeptidase (295 aa).

H63 contacts substrate. A divalent metal cation-binding residues include D83, D94, and H154. A substrate-binding site is contributed by H162. A divalent metal cation-binding residues include E188 and E281.

It belongs to the peptidase M24A family. Methionine aminopeptidase archaeal type 2 subfamily. As to quaternary structure, monomer. The cofactor is Fe(2+). Requires Co(2+) as cofactor. Ni(2+) is required as a cofactor. It depends on Mn(2+) as a cofactor.

It carries out the reaction Release of N-terminal amino acids, preferentially methionine, from peptides and arylamides.. Its function is as follows. Removes the N-terminal methionine from nascent proteins. The N-terminal methionine is often cleaved when the second residue in the primary sequence is small and uncharged (Met-Ala-, Cys, Gly, Pro, Ser, Thr, or Val). The chain is Methionine aminopeptidase from Thermococcus onnurineus (strain NA1).